A 280-amino-acid chain; its full sequence is UDP-2,3-diacylglucosamine pyrophosphatase LpxI (280 aa).

Substrate-binding positions include Ala12, 74–75 (NV), Gln169, 187–188 (TD), Lys214, and 226–233 (LPTIGVAT).

Belongs to the LpxI family. As to quaternary structure, homodimer. Requires Mg(2+) as cofactor.

The protein resides in the cell inner membrane. The enzyme catalyses UDP-2-N,3-O-bis[(3R)-3-hydroxytetradecanoyl]-alpha-D-glucosamine + H2O = 2-N,3-O-bis[(3R)-3-hydroxytetradecanoyl]-alpha-D-glucosaminyl 1-phosphate + UMP + 2 H(+). Its pathway is glycolipid biosynthesis; lipid IV(A) biosynthesis; lipid IV(A) from (3R)-3-hydroxytetradecanoyl-[acyl-carrier-protein] and UDP-N-acetyl-alpha-D-glucosamine: step 4/6. With respect to regulation, inhibited by high concentrations of Cu(2+) and Zn(2+). Completely inhibited by EDTA in vitro. Functionally, hydrolyzes the pyrophosphate bond of UDP-2,3-diacylglucosamine to form 2,3-diacylglucosamine 1-phosphate (lipid X) and UMP by catalyzing the attack of water at the beta-P atom. Involved in the biosynthesis of lipid A, a phosphorylated glycolipid that anchors the lipopolysaccharide to the outer membrane of the cell. Can functionally complement lpxH deficiency in E.coli. Cannot use CDP-diacylglycerol as substrate. The polypeptide is UDP-2,3-diacylglucosamine pyrophosphatase LpxI (Caulobacter vibrioides (strain ATCC 19089 / CIP 103742 / CB 15) (Caulobacter crescentus)).